Reading from the N-terminus, the 440-residue chain is Cyclic dipeptide prenyltransferase (440 aa).

The interval 1–33 is disordered; the sequence is MDGEMTASPPDISACDTSAVDEQTGQSGQSQAP. Residues 20 to 32 are compositionally biased toward polar residues; it reads VDEQTGQSGQSQA. Residues Thr108 and Glu116 each contribute to the substrate site. Residues Arg129, Lys219, and Tyr221 each contribute to the dimethylallyl diphosphate site. Phe223 serves as a coordination point for substrate. Positions 286, 288, 366, 431, and 435 each coordinate dimethylallyl diphosphate.

Belongs to the tryptophan dimethylallyltransferase family.

It catalyses the reaction harmol + dimethylallyl diphosphate = 6-(3-dimethylallyl)harmol + diphosphate. The enzyme catalyses an N-terminal L-tryptophanyl-L-alpha-aminoacyl-[peptide] + H2O = an N-terminal L-alpha-aminoacyl-[peptide] + L-tryptophan. The catalysed reaction is (R)-benzodiazepinedione + dimethylallyl diphosphate = (2S,3R,11R)-aszonalenin + diphosphate. It carries out the reaction (S)-benzodiazepinedione + dimethylallyl diphosphate = (2S,3R,11S)-aszonalenin + diphosphate. Prenyltransferase that catalyzes reverse prenylation at position N-1 of tryptophan-containing cyclic dipeptides. Accepts only dimethylallyl diphosphate (DMAPP) as the prenyl donor but shows broad substrate specificities toward its aromatic substrates. Also shows tryptophan aminopeptidase activity with preference for linear peptides containing a tryptophanyl moiety at the N-terminus. In Aspergillus fumigatus (Neosartorya fumigata), this protein is Cyclic dipeptide prenyltransferase.